Consider the following 167-residue polypeptide: Peptide deformylase (167 aa).

Residues C91 and H133 each contribute to the Fe cation site. E134 is an active-site residue. H137 provides a ligand contact to Fe cation.

The protein belongs to the polypeptide deformylase family. Fe(2+) is required as a cofactor.

It carries out the reaction N-terminal N-formyl-L-methionyl-[peptide] + H2O = N-terminal L-methionyl-[peptide] + formate. Its function is as follows. Removes the formyl group from the N-terminal Met of newly synthesized proteins. Requires at least a dipeptide for an efficient rate of reaction. N-terminal L-methionine is a prerequisite for activity but the enzyme has broad specificity at other positions. The sequence is that of Peptide deformylase from Nitrosococcus oceani (strain ATCC 19707 / BCRC 17464 / JCM 30415 / NCIMB 11848 / C-107).